The sequence spans 377 residues: Anhydro-N-acetylmuramic acid kinase (377 aa).

12–19 (GTSLDGID) serves as a coordination point for ATP.

This sequence belongs to the anhydro-N-acetylmuramic acid kinase family.

The enzyme catalyses 1,6-anhydro-N-acetyl-beta-muramate + ATP + H2O = N-acetyl-D-muramate 6-phosphate + ADP + H(+). The protein operates within amino-sugar metabolism; 1,6-anhydro-N-acetylmuramate degradation. It functions in the pathway cell wall biogenesis; peptidoglycan recycling. In terms of biological role, catalyzes the specific phosphorylation of 1,6-anhydro-N-acetylmuramic acid (anhMurNAc) with the simultaneous cleavage of the 1,6-anhydro ring, generating MurNAc-6-P. Is required for the utilization of anhMurNAc either imported from the medium or derived from its own cell wall murein, and thus plays a role in cell wall recycling. This chain is Anhydro-N-acetylmuramic acid kinase, found in Methylorubrum extorquens (strain CM4 / NCIMB 13688) (Methylobacterium extorquens).